Consider the following 209-residue polypeptide: MGKGDPNKPRGKMSSYAFFVQTCREEHKKKHPDSSVNFAEFSKKCSERWKTMSAKEKSKFEDMAKSDKARYDREMKNYVPPKGDKKGKKKDPNAPKRPPSAFFLFCSEHRPKIKSEHPGLSIGDTAKKLGEMWSEQSAKDKQPYEQKAAKLKEKYEKDIAAYRAKGKSEAGKKGPGRPTGSKKKNEPEDEEEEEEEEDEDEEEEDEDEE.

An N6-acetyllysine modification is found at K3. The HMG box 1 DNA-binding region spans 9–79 (PRGKMSSYAF…RYDREMKNYV (71 aa)). The residue at position 23 (C23) is a Cysteine sulfonic acid (-SO3H); alternate. C23 and C45 are disulfide-bonded. At K30 the chain carries N6-acetyllysine. Position 35 is a phosphoserine (S35). Residue K43 is modified to N6-acetyllysine. C45 bears the Cysteine sulfonic acid (-SO3H); alternate mark. Over residues 52-76 (MSAKEKSKFEDMAKSDKARYDREMK) the composition is skewed to basic and acidic residues. Disordered stretches follow at residues 52–150 (MSAK…KAAK) and 162–209 (YRAK…EDEE). Residue K90 is modified to N6-acetyllysine. The segment at residues 95–163 (PKRPPSAFFL…KYEKDIAAYR (69 aa)) is a DNA-binding region (HMG box 2). Position 100 is a phosphoserine (S100). Position 106 is a cysteine sulfonic acid (-SO3H) (C106). 3 stretches are compositionally biased toward basic and acidic residues: residues 107-117 (SEHRPKIKSEH), 137-150 (SAKD…KAAK), and 162-172 (YRAKGKSEAGK). An N6-acetyllysine mark is found at K114 and K141. The segment at 165 to 180 (KGKSEAGKKGPGRPTG) is required for chemotactic activity. A compositionally biased stretch (acidic residues) spans 187–209 (PEDEEEEEEEEDEDEEEEDEDEE).

The protein belongs to the HMGB family. In terms of assembly, interacts with POU2F2, POU2F1 and POU3F1. Component of the RAG complex composed of core components RAG1 and RAG2, and associated component HMGB1 or HMGB2. Component of the SET complex, composed of at least ANP32A, APEX1, HMGB2, NME1, SET and TREX1. Directly interacts with SET. Interacts with LEF1. Reduction/oxidation of cysteine residues Cys-23, Cys-45 and Cys-106 and a possible intramolecular disulfide bond involving Cys-23 and Cys-45 give rise to different redox forms with specific functional activities in various cellular compartments: 1- fully reduced HMGB2 (HMGB2C23hC45hC106h), 2- disulfide HMGB2 (HMGB2C23-C45C106h) and 3- sulfonyl HMGB2 (HMGB2C23soC45soC106so).

It is found in the nucleus. The protein resides in the chromosome. It localises to the cytoplasm. Its subcellular location is the secreted. Its function is as follows. Multifunctional protein with various roles in different cellular compartments. May act in a redox sensitive manner. In the nucleus is an abundant chromatin-associated non-histone protein involved in transcription, chromatin remodeling and V(D)J recombination and probably other processes. Binds DNA with a preference to non-canonical DNA structures such as single-stranded DNA. Can bent DNA and enhance DNA flexibility by looping thus providing a mechanism to promote activities on various gene promoters by enhancing transcription factor binding and/or bringing distant regulatory sequences into close proximity. Involved in V(D)J recombination by acting as a cofactor of the RAG complex: acts by stimulating cleavage and RAG protein binding at the 23 bp spacer of conserved recombination signal sequences (RSS). Proposed to be involved in the innate immune response to nucleic acids by acting as a cytoplasmic promiscuous immunogenic DNA/RNA sensor which cooperates with subsequent discriminative sensing by specific pattern recognition receptors. In the extracellular compartment acts as a chemokine. Promotes proliferation and migration of endothelial cells implicating AGER/RAGE. Has antimicrobial activity in gastrointestinal epithelial tissues. Involved in inflammatory response to antigenic stimulus coupled with pro-inflammatory activity. May play a role in germ cell differentiation. Involved in modulation of neurogenesis probably by regulation of neural stem proliferation. Involved in articular cartilage surface maintenance implicating LEF1 and the Wnt/beta-catenin pathway. The polypeptide is High mobility group protein B2 (HMGB2) (Bos taurus (Bovine)).